Here is a 2149-residue protein sequence, read N- to C-terminus: Serine/threonine-protein kinase WNK2 (2149 aa).

Residues 1 to 10 show a composition bias toward basic and acidic residues; that stretch reads MDGDGGRRDA. Disordered regions lie at residues 1-75 and 87-183; these read MDGD…QRRV and ERAR…EDDL. Omega-N-methylarginine is present on residues Arg-19 and Arg-30. Position 45 is a phosphoserine (Ser-45). Pro residues predominate over residues 95-114; the sequence is APAPAAPAAPPGSPSVPSDP. A compositionally biased stretch (basic and acidic residues) spans 161-172; sequence AKPEPGRARKDE. Over residues 173 to 182 the composition is skewed to acidic residues; sequence PEEEEDDEDD. Residues 195 to 453 form the Protein kinase domain; that stretch reads LKFDIELGRG…IKDLLSHAFF (259 aa). ATP-binding positions include Ser-205, 275–278, and Lys-325; that span reads TELM. Asp-342 acts as the Proton acceptor in catalysis. Phosphoserine; by autocatalysis is present on residues Ser-352 and Ser-356. Ser-560 carries the post-translational modification Phosphoserine. Disordered stretches follow at residues 578–630, 703–728, and 1067–1133; these read HAQS…DSQS, SMSF…APPV, and QEEQ…ERAS. Positions 605–625 are enriched in polar residues; that stretch reads ASVTSLASDSTFDSGQGSTVY. The span at 709-728 shows a compositional bias: pro residues; it reads VLPPPSTPVPTGPSQPAPPV. The span at 1081-1092 shows a compositional bias: polar residues; it reads QSSESFGGSDVT. Ser-1098 carries the post-translational modification Phosphoserine. Positions 1115 to 1126 are enriched in basic residues; sequence ARKHHRRSTRAR. The residue at position 1210 (Ser-1210) is a Phosphoserine. Disordered stretches follow at residues 1211–1234 and 1270–1502; these read EDTD…CGLA and PATD…GFVD. Low complexity-rich tracts occupy residues 1275–1292 and 1317–1353; these read SESS…EASQ and SQAG…STVP. The span at 1386–1400 shows a compositional bias: polar residues; that stretch reads RSAQCTAQPLSTGQG. The span at 1470-1485 shows a compositional bias: pro residues; the sequence is LPSPPLGPTAPPPPPS. Residues Ser-1507, Ser-1566, and Ser-1594 each carry the phosphoserine modification. 2 disordered regions span residues 1521-1727 and 1739-1778; these read VPTS…PSSP and ASSI…GGVA. Polar residues predominate over residues 1553–1567; sequence SDKTPSLTQQTQPSL. The segment covering 1587 to 1597 has biased composition (low complexity); sequence SSPMTAESSSS. Residues 1610 to 1629 show a composition bias toward polar residues; the sequence is ASDSSTAPSVPQDASGSSVP. Ser-1725, Ser-1726, Ser-1770, and Ser-1797 each carry phosphoserine. Positions 1916 to 1928 are enriched in polar residues; that stretch reads ASSTGHLSDSSRG. Residues 1916-1947 form a disordered region; it reads ASSTGHLSDSSRGPPTKDPRGTKAVQTQQPCS. Ser-1962 carries the phosphoserine modification. The segment covering 2018–2031 has biased composition (polar residues); it reads SSLYDSPGSSTSSL. Disordered regions lie at residues 2018–2044 and 2122–2149; these read SSLY…PTLH and GPLS…EKPD. Residues 2122–2135 are compositionally biased toward low complexity; it reads GPLSTTATPGATPA.

The protein belongs to the protein kinase superfamily. Ser/Thr protein kinase family. WNK subfamily. In terms of assembly, forms a complex with the phosphorylated form of STK39 in the brain. The cofactor is Mg(2+). Post-translationally, autophosphorylated. Autophosphorylation at Ser-352 and Ser-356 promotes its activity. As to expression, brain and heart.

The protein localises to the cytoplasm. The protein resides in the cell membrane. The enzyme catalyses L-seryl-[protein] + ATP = O-phospho-L-seryl-[protein] + ADP + H(+). It carries out the reaction L-threonyl-[protein] + ATP = O-phospho-L-threonyl-[protein] + ADP + H(+). Its activity is regulated as follows. Activation requires autophosphorylation of Ser-356 and, to a lower extent, Ser-352. Serine/threonine-protein kinase component of the WNK2-SPAK/OSR1 kinase cascade, which plays an important role in the regulation of electrolyte homeostasis, cell signaling, survival, and proliferation. The WNK2-SPAK/OSR1 kinase cascade is composed of WNK2, which mediates phosphorylation and activation of downstream kinases OXSR1/OSR1 and STK39/SPAK. Following activation, OXSR1/OSR1 and STK39/SPAK catalyze phosphorylation of ion cotransporters, regulating their activity. Acts as an activator and inhibitor of sodium-coupled chloride cotransporters and potassium-coupled chloride cotransporters respectively. Activates SLC12A2, SCNN1A, SCNN1B, SCNN1D and SGK1 and inhibits SLC12A5. Negatively regulates the EGF-induced activation of the ERK/MAPK-pathway and the downstream cell cycle progression. Affects MAPK3/MAPK1 activity by modulating the activity of MAP2K1 and this modulation depends on phosphorylation of MAP2K1 by PAK1. WNK2 acts by interfering with the activity of PAK1 by controlling the balance of the activity of upstream regulators of PAK1 activity, RHOA and RAC1, which display reciprocal activity. The sequence is that of Serine/threonine-protein kinase WNK2 from Mus musculus (Mouse).